The sequence spans 159 residues: Type-1 angiotensin II receptor-associated protein (159 aa).

At 1 to 23 (MELPAVNLKVILLGHWLLTTWGC) the chain is on the extracellular side. Residues 24 to 44 (IVFSGSYAWANFTILALGVWA) form a helical membrane-spanning segment. Over 45–55 (VAQRDSIDAIS) the chain is Cytoplasmic. The helical transmembrane segment at 56-76 (MFLGGLLATIFLDIVHISIFY) threads the bilayer. At 77–86 (PRVSLTDTGR) the chain is on the extracellular side. The chain crosses the membrane as a helical span at residues 87–107 (FGVGMAILSLLLKPLSCCFVY). Over 108-159 (HMYRERGGELLVHTGFLGSSQDRSAYQTIDSAEAPADPFAVPEGRSQDARGY) the chain is Cytoplasmic. The interval 110–122 (YRERGGELLVHTG) is interaction with AGTR1. 2 positions are modified to phosphoserine: serine 126 and serine 127. Phosphothreonine is present on threonine 135. Serine 138 and serine 153 each carry phosphoserine. The tract at residues 140-159 (EAPADPFAVPEGRSQDARGY) is disordered.

As to quaternary structure, interacts with RACK1, and with the C-terminal region of AGTR1. In terms of tissue distribution, ubiquitous but more abundant in kidney, heart, pancreas and thyroid.

Its subcellular location is the endoplasmic reticulum membrane. It localises to the golgi apparatus membrane. The protein localises to the cytoplasmic vesicle membrane. In terms of biological role, appears to be a negative regulator of type-1 angiotensin II receptor-mediated signaling by regulating receptor internalization as well as mechanism of receptor desensitization such as phosphorylation. Also induces a decrease in cell proliferation and angiotensin II-stimulated transcriptional activity. The protein is Type-1 angiotensin II receptor-associated protein (AGTRAP) of Homo sapiens (Human).